A 237-amino-acid polypeptide reads, in one-letter code: BTB/POZ domain-containing protein KCTD6 (237 aa).

The segment at 1-104 (MDNGDWGYMM…FYQIEPLIQC (104 aa)) is interaction with ANK1 isoform Mu17. An interaction with CUL3 region spans residues 10-110 (MTDPVTLNVG…LIQCLNDPKP (101 aa)). A BTB domain is found at 12 to 81 (DPVTLNVGGH…LRTSELTLPL (70 aa)). The segment at 113-187 (PMDTFEEVVE…TFGPCDYHQE (75 aa)) is interaction with USP21.

As to quaternary structure, homopentamer. Interacts with KCTD11; KCTD6 and KCTD11 may associate in pentameric assemblies. Interacts (via BTB domain) with CUL3; initially a 4:4 stoichiometry has been reported, however, electron microscopy revealed pentameric states with a five-pointed pinwheel shape. The interaction with CUL3 is indicative for a participation in a BCR (BTB-CUL3-RBX1) E3 ubiquitin-protein ligase complex. Interacts with HDAC1; probably indirect as the interaction is requires the presence of KCTD11. Interacts with USP21 (preferentially catalytic inactive form). Interacts with ANK1 isoform Mu17; detected in striated muscle. Interacts with USP11. In terms of tissue distribution, highly expressed in cerebellum and brain. Expression is down-regulated in medulloblastoma.

The protein localises to the cytoplasm. Its subcellular location is the myofibril. It is found in the sarcomere. It localises to the m line. It functions in the pathway protein modification; protein ubiquitination. Functionally, probable substrate-specific adapter of a BCR (BTB-CUL3-RBX1) E3 ubiquitin-protein ligase complex mediating the ubiquitination and subsequent proteasomal degradation of target proteins. Promotes the ubiquitination of HDAC1; the function seems to depend on KCTD11:KCTD6 oligomerization. Can function as antagonist of the Hedgehog pathway by affecting the nuclear transfer of transcription factor GLI1; the function probably occurs via HDAC1 down-regulation, keeping GLI1 acetylated and inactive. Inhibits cell growth and tumorigenicity of medulloblastoma (MDB). Involved in regulating protein levels of ANK1 isoform Mu17 probably implicating CUL3-dependent proteasomal degradation. The protein is BTB/POZ domain-containing protein KCTD6 (KCTD6) of Homo sapiens (Human).